A 138-amino-acid chain; its full sequence is Small ribosomal subunit protein uS11c (138 aa).

Residues 1–22 (MAKPILRIGSRKNTRSGSRKNV) are disordered. Over residues 9–22 (GSRKNTRSGSRKNV) the composition is skewed to basic residues.

This sequence belongs to the universal ribosomal protein uS11 family. In terms of assembly, part of the 30S ribosomal subunit.

The protein resides in the plastid. Its subcellular location is the chloroplast. This Arabis hirsuta (Hairy rock-cress) protein is Small ribosomal subunit protein uS11c.